Reading from the N-terminus, the 664-residue chain is Probable L-type lectin-domain containing receptor kinase V.3 (664 aa).

Positions Met-1–Gly-26 are cleaved as a signal peptide. Topologically, residues Arg-27–Leu-278 are extracellular. The interval Leu-28–Val-250 is legume-lectin like. 5 N-linked (GlcNAc...) asparagine glycosylation sites follow: Asn-69, Asn-116, Asn-122, Asn-174, and Asn-197. The helical transmembrane segment at Ile-279 to Ile-299 threads the bilayer. Residues Val-300–Leu-664 lie on the Cytoplasmic side of the membrane. In terms of domain architecture, Protein kinase spans Asn-335–Leu-617. Residues Leu-341–Val-349 and Lys-364 each bind ATP. Asp-461 acts as the Proton acceptor in catalysis.

In the C-terminal section; belongs to the protein kinase superfamily. Ser/Thr protein kinase family. This sequence in the N-terminal section; belongs to the leguminous lectin family.

Its subcellular location is the cell membrane. The enzyme catalyses L-seryl-[protein] + ATP = O-phospho-L-seryl-[protein] + ADP + H(+). It catalyses the reaction L-threonyl-[protein] + ATP = O-phospho-L-threonyl-[protein] + ADP + H(+). This is Probable L-type lectin-domain containing receptor kinase V.3 (LECRK53) from Arabidopsis thaliana (Mouse-ear cress).